The chain runs to 299 residues: uncharacterized protein (299 aa).

This is an uncharacterized protein from Escherichia coli (strain K12).